Reading from the N-terminus, the 211-residue chain is HTH-type transcriptional regulator AlkX (211 aa).

The 61-residue stretch at 22–82 (ALLRDSVLDA…GYALRLADRL (61 aa)) folds into the HTH tetR-type domain. The segment at residues 45 to 64 (TLSDVARAAGISRQTIYNEF) is a DNA-binding region (H-T-H motif).

As to quaternary structure, homodimer.

The protein resides in the cytoplasm. DNA-binding activity may be regulated by fatty acids. Functionally, represses the expression of the alkB-rubAB operon, which encodes the alkane hydroxylase AlkB and the rubredoxins RubA and RubB. Acts by binding to the promoter region of the operon. In addition, EMSA analysis show that AlkX can bind to the promoter region of mmpS1 and mmpL3 and to the intragenic region of mmpL11, suggesting that it may participate in the regulatory network that controls the expression of MmpL lipid transporters. This is HTH-type transcriptional regulator AlkX from Mycobacterium tuberculosis (strain ATCC 25618 / H37Rv).